Here is a 227-residue protein sequence, read N- to C-terminus: ATP synthase F(0) complex subunit a (227 aa).

6 helical membrane passes run 9–29, 69–89, 98–118, 132–152, 165–185, and 190–210; these read FASP…LPWV, WALL…LGLL, QLSL…IIGM, EGTP…SLFI, LTAG…LMPM, and AILT…VAMI.

The protein belongs to the ATPase A chain family. As to quaternary structure, component of the ATP synthase complex composed at least of ATP5F1A/subunit alpha, ATP5F1B/subunit beta, ATP5MC1/subunit c (homooctomer), MT-ATP6/subunit a, MT-ATP8/subunit 8, ATP5ME/subunit e, ATP5MF/subunit f, ATP5MG/subunit g, ATP5MK/subunit k, ATP5MJ/subunit j, ATP5F1C/subunit gamma, ATP5F1D/subunit delta, ATP5F1E/subunit epsilon, ATP5PF/subunit F6, ATP5PB/subunit b, ATP5PD/subunit d, ATP5PO/subunit OSCP. ATP synthase complex consists of a soluble F(1) head domain (subunits alpha(3) and beta(3)) - the catalytic core - and a membrane F(0) domain - the membrane proton channel (subunits c, a, 8, e, f, g, k and j). These two domains are linked by a central stalk (subunits gamma, delta, and epsilon) rotating inside the F1 region and a stationary peripheral stalk (subunits F6, b, d, and OSCP). Interacts with DNAJC30; interaction is direct.

The protein resides in the mitochondrion inner membrane. The enzyme catalyses H(+)(in) = H(+)(out). Its function is as follows. Subunit a, of the mitochondrial membrane ATP synthase complex (F(1)F(0) ATP synthase or Complex V) that produces ATP from ADP in the presence of a proton gradient across the membrane which is generated by electron transport complexes of the respiratory chain. ATP synthase complex consist of a soluble F(1) head domain - the catalytic core - and a membrane F(1) domain - the membrane proton channel. These two domains are linked by a central stalk rotating inside the F(1) region and a stationary peripheral stalk. During catalysis, ATP synthesis in the catalytic domain of F(1) is coupled via a rotary mechanism of the central stalk subunits to proton translocation. With the subunit c (ATP5MC1), forms the proton-conducting channel in the F(0) domain, that contains two crucial half-channels (inlet and outlet) that facilitate proton movement from the mitochondrial intermembrane space (IMS) into the matrix. Protons are taken up via the inlet half-channel and released through the outlet half-channel, following a Grotthuss mechanism. The sequence is that of ATP synthase F(0) complex subunit a from Carassius auratus (Goldfish).